The following is a 301-amino-acid chain: Multifunctional dioxygenase prhA (301 aa).

Fe cation-binding residues include His130, Asp132, and His214.

This sequence belongs to the PhyH family. As to quaternary structure, homodimer. The cofactor is Fe cation.

It carries out the reaction preaustinoid A1 + 2-oxoglutarate + O2 = berkeleyone B + succinate + CO2 + H2O. The catalysed reaction is berkeleyone B + 2-oxoglutarate + O2 = berkeleydione + succinate + CO2 + H2O. It catalyses the reaction preaustinoid A + 2 2-oxoglutarate + 2 O2 = berkeleytrione + 2 succinate + 2 CO2 + H2O. Its pathway is secondary metabolite biosynthesis; terpenoid biosynthesis. Multifunctional dioxygenase; part of the gene cluster that mediates the biosynthesis of paraherquonin, a meroterpenoid with a unique, highly congested hexacyclic molecular architecture. The first step of the pathway is the synthesis of 3,5-dimethylorsellinic acid (DMOA) by the polyketide synthase prhL. Synthesis of DMOA is followed by farnesylation by the prenyltransferase prhE, methylesterification by the methyl-transferase prhM, epoxidation of the prenyl chain by the flavin-dependent monooxygenase prhF, and cyclization of the farnesyl moiety by the terpene cyclase prhH, to yield the tetracyclic intermediate, protoaustinoid A. The short chain dehydrogenase prhI then oxidizes the C-3 alcohol group of the terpene cyclase product to transform protoaustinoid A into protoaustinoid B. The FAD-binding monooxygenase prhJ catalyzes the oxidation of protoaustinoid B into preaustinoid A which is further oxidized into preaustinoid A1 by FAD-binding monooxygenase phrK. Finally, prhA leads to berkeleydione via the berkeleyone B intermediate. PrhA is a multifunctional dioxygenase that first desaturates at C5-C6 to form berkeleyone B, followed by rearrangement of the A/B-ring to form the cycloheptadiene moiety in berkeleydione. Berkeleydione serves as the key intermediate for the biosynthesis of paraherquonin as well as many other meroterpenoids. The cytochrome P450 monooxygenases prhB, prhD, and prhN, as well as the isomerase prhC, are probably involved in the late stage of paraherquonin biosynthesis, after the production of berkeleydione. Especially prhC might be a multifunctional enzyme that catalyzes the D-ring expansion via intramolecular methoxy rearrangement, as well as the hydrolysis of the expanded D-ring. This chain is Multifunctional dioxygenase prhA, found in Penicillium brasilianum.